Here is a 368-residue protein sequence, read N- to C-terminus: tRNA-specific 2-thiouridylase MnmA (368 aa).

ATP is bound by residues Gly-11–Ser-18 and Met-37. The interaction with target base in tRNA stretch occupies residues Asn-97 to Asp-99. Cys-102 acts as the Nucleophile in catalysis. Cys-102 and Cys-199 are disulfide-bonded. Position 127 (Gly-127) interacts with ATP. The tract at residues Lys-149–Gln-151 is interaction with tRNA. The active-site Cysteine persulfide intermediate is Cys-199. The tract at residues Arg-311 to Tyr-312 is interaction with tRNA.

Belongs to the MnmA/TRMU family. In terms of assembly, interacts with TusE.

It is found in the cytoplasm. The catalysed reaction is S-sulfanyl-L-cysteinyl-[protein] + uridine(34) in tRNA + AH2 + ATP = 2-thiouridine(34) in tRNA + L-cysteinyl-[protein] + A + AMP + diphosphate + H(+). Functionally, catalyzes the 2-thiolation of uridine at the wobble position (U34) of tRNA(Lys), tRNA(Glu) and tRNA(Gln), leading to the formation of s(2)U34, the first step of tRNA-mnm(5)s(2)U34 synthesis. Sulfur is provided by IscS, via a sulfur-relay system. Binds ATP and its substrate tRNAs. In Salmonella paratyphi B (strain ATCC BAA-1250 / SPB7), this protein is tRNA-specific 2-thiouridylase MnmA.